The chain runs to 187 residues: Large ribosomal subunit protein uL6c (187 aa).

This sequence belongs to the universal ribosomal protein uL6 family. In terms of assembly, part of the 50S ribosomal subunit.

It localises to the plastid. It is found in the chloroplast. In terms of biological role, binds 23S rRNA. The polypeptide is Large ribosomal subunit protein uL6c (rpl6) (Thalassiosira pseudonana (Marine diatom)).